We begin with the raw amino-acid sequence, 458 residues long: Ribosomal protein uS12 methylthiotransferase RimO (458 aa).

In terms of domain architecture, MTTase N-terminal spans 8 to 119 (PTVAFAHLGC…IVDVLQRVEV (112 aa)). [4Fe-4S] cluster is bound by residues Cys17, Cys53, Cys82, Cys157, Cys161, and Cys164. In terms of domain architecture, Radical SAM core spans 143 to 372 (TTDQAVAFLK…MALQQPISAE (230 aa)). Residues 375–446 (SRWVGRTVDV…IYDLNGQMVG (72 aa)) enclose the TRAM domain.

This sequence belongs to the methylthiotransferase family. RimO subfamily. [4Fe-4S] cluster serves as cofactor.

Its subcellular location is the cytoplasm. It carries out the reaction L-aspartate(89)-[ribosomal protein uS12]-hydrogen + (sulfur carrier)-SH + AH2 + 2 S-adenosyl-L-methionine = 3-methylsulfanyl-L-aspartate(89)-[ribosomal protein uS12]-hydrogen + (sulfur carrier)-H + 5'-deoxyadenosine + L-methionine + A + S-adenosyl-L-homocysteine + 2 H(+). Catalyzes the methylthiolation of an aspartic acid residue of ribosomal protein uS12. The protein is Ribosomal protein uS12 methylthiotransferase RimO of Synechococcus sp. (strain CC9605).